The primary structure comprises 256 residues: Type III pantothenate kinase (256 aa).

6-13 (DCGNTNTV) serves as a coordination point for ATP. 107-110 (GPDR) lines the substrate pocket. The Proton acceptor role is filled by Asp109. Residue Asp129 participates in K(+) binding. Residue Thr132 coordinates ATP. Thr184 serves as a coordination point for substrate.

The protein belongs to the type III pantothenate kinase family. As to quaternary structure, homodimer. Requires NH4(+) as cofactor. It depends on K(+) as a cofactor.

It is found in the cytoplasm. It catalyses the reaction (R)-pantothenate + ATP = (R)-4'-phosphopantothenate + ADP + H(+). The protein operates within cofactor biosynthesis; coenzyme A biosynthesis; CoA from (R)-pantothenate: step 1/5. Its function is as follows. Catalyzes the phosphorylation of pantothenate (Pan), the first step in CoA biosynthesis. This is Type III pantothenate kinase from Dinoroseobacter shibae (strain DSM 16493 / NCIMB 14021 / DFL 12).